The primary structure comprises 365 residues: Galactoside alpha-(1,2)-fucosyltransferase 1 (365 aa).

Over M1–H8 the chain is Cytoplasmic. The chain crosses the membrane as a helical; Signal-anchor for type II membrane protein span at residues L9 to F25. Residues L26–P365 are Lumenal-facing. 3 N-linked (GlcNAc...) asparagine glycosylation sites follow: N65, N301, and N327.

Belongs to the glycosyltransferase 11 family.

The protein resides in the golgi apparatus. Its subcellular location is the golgi stack membrane. The enzyme catalyses a beta-D-galactosyl-(1-&gt;4)-N-acetyl-beta-D-glucosaminyl derivative + GDP-beta-L-fucose = an alpha-L-Fuc-(1-&gt;2)-beta-D-Gal-(1-&gt;4)-beta-D-GlcNAc derivative + GDP + H(+). The catalysed reaction is a ganglioside GA1 + GDP-beta-L-fucose = a ganglioside Fuc-GA1 + GDP + H(+). It catalyses the reaction a beta-D-Gal-(1-&gt;3)-beta-D-GlcNAc-(1-&gt;3)-beta-D-Gal-(1-&gt;4)-beta-D-Glc-(1&lt;-&gt;1')-Cer(d18:1(4E)) + GDP-beta-L-fucose = alpha-L-fucosyl-(1-&gt;2)- beta-D-galactosyl-(1-&gt;3)-N-acetyl-beta-D-glucosaminyl-(1-&gt;3)-beta-D-galactosyl-(1-&gt;4)-beta-D-glucosyl-(1&lt;-&gt;1')-N-acylsphing-4-enine + GDP + H(+). It carries out the reaction a neolactoside nLc4Cer(d18:1(4E)) + GDP-beta-L-fucose = a neolactoside IV(2)-alpha-Fuc-nLc4Cer(d18:1(4E)) + GDP + H(+). The enzyme catalyses a ganglioside GM1 + GDP-beta-L-fucose = a ganglioside Fuc-GM1 + GDP + H(+). The catalysed reaction is beta-D-galactosyl-(1-&gt;3)-N-acetyl-D-galactosamine + GDP-beta-L-fucose = alpha-L-fucosyl-(1-&gt;2)-beta-D-galactosyl-(1-&gt;3)-N-acetyl-D-galactosamine + GDP + H(+). It participates in protein modification; protein glycosylation. Functionally, catalyzes the transfer of L-fucose, from a guanosine diphosphate-beta-L-fucose, to the terminal galactose residue of glycoconjugates through an alpha(1,2) linkage leading to H antigen synthesis that is an intermediate substrate in the synthesis of ABO blood group antigens. H antigen is essential for maturation of the glomerular layer of the main olfactory bulb, in cell migration and early cell-cell contacts during tumor associated angiogenesis. Preferentially fucosylates soluble lactose and to a lesser extent fucosylates glycolipids gangliosides GA1 and GM1a. This Mico humeralifer (Black and white tassel-ear marmoset) protein is Galactoside alpha-(1,2)-fucosyltransferase 1.